Reading from the N-terminus, the 855-residue chain is Suppressor of tumorigenicity 14 protein homolog (855 aa).

The Cytoplasmic portion of the chain corresponds to 1–55 (MGSNRGRKAGGGSQDFGAGLKYNSRLENMNGFEEGVEFLPANNAKKVEKRGPRRW). Position 13 is a phosphoserine (Ser13). The helical; Signal-anchor for type II membrane protein transmembrane segment at 56–76 (VVLVAVLFSFLLLSLMAGLLV) threads the bilayer. Residues 77–855 (WHFHYRNVRV…RDWIKEHTGV (779 aa)) are Extracellular-facing. Residues 86 to 203 (VQKVFNGHLR…TSVVAFPIDP (118 aa)) form the SEA domain. Residue Asn107 is glycosylated (N-linked (GlcNAc...) asparagine). An intrachain disulfide couples Cys214 to Cys244. CUB domains follow at residues 214–331 (CSFA…EATF) and 340–444 (CGGF…LAEY). N-linked (GlcNAc...) asparagine glycans are attached at residues Asn302 and Asn365. 2 disulfide bridges follow: Cys340–Cys366 and Cys397–Cys410. The N-linked (GlcNAc...) asparagine glycan is linked to Asn421. LDL-receptor class A domains lie at 451-488 (DPCPGMFMCKTGRCIRKELRCDGWADCPDYSDERYCRC), 489-522 (NATHQFTCKNQFCKPLFWVCDSVNDCGDGSDEEG), 523-561 (CSCPAGSFKCSNGKCLPQSQKCNGKDNCGDGSDEASCDS), and 565-604 (VSCTKYTYRCQNGLCLSKGNPECDGKTDCSDGSDEKNCDC). 13 cysteine pairs are disulfide-bonded: Cys453–Cys464, Cys459–Cys477, Cys471–Cys486, Cys488–Cys501, Cys496–Cys514, Cys508–Cys523, Cys525–Cys537, Cys532–Cys550, Cys544–Cys559, Cys567–Cys579, Cys574–Cys593, Cys587–Cys602, and Cys641–Cys657. Residue Asn489 is glycosylated (N-linked (GlcNAc...) asparagine). One can recognise a Peptidase S1 domain in the interval 615 to 854 (VVGGTNADEG…VRDWIKEHTG (240 aa)). Active-site charge relay system residues include His656 and Asp711. The N-linked (GlcNAc...) asparagine glycan is linked to Asn772. 2 cysteine pairs are disulfide-bonded: Cys776–Cys790 and Cys801–Cys830. Catalysis depends on Ser805, which acts as the Charge relay system.

This sequence belongs to the peptidase S1 family. In terms of assembly, interacts with CDCP1. May interact with TMEFF1. Highly expressed in intestine, kidney, lung, and thymus. Not expressed in skeletal muscle, liver, heart, testis and brain.

Its subcellular location is the membrane. It catalyses the reaction Cleaves various synthetic substrates with Arg or Lys at the P1 position and prefers small side-chain amino acids, such as Ala and Gly, at the P2 position.. Its function is as follows. Exhibits trypsin-like activity as defined by cleavage of synthetic substrates with Arg or Lys as the P1 site. Involved in the terminal differentiation of keratinocytes through prostasin (PRSS8) activation and filaggrin (FLG) processing. Proteolytically cleaves and therefore activates TMPRSS13. The sequence is that of Suppressor of tumorigenicity 14 protein homolog (St14) from Mus musculus (Mouse).